A 213-amino-acid polypeptide reads, in one-letter code: DELTA-actitoxin-Aas1a (213 aa).

A signal peptide spans 1 to 19 (MSRLIIAFIVVTMVCSAIA). Residues 20 to 34 (LPKKKVEPLEKDEKR) constitute a propeptide that is removed on maturation. Positions 37-46 (AVAGAVIEGG) are plays an important role in the hemolytic activity. The segment at 45-64 (GGNLVMSVLDRILEAIGDVN) is N-terminal region. 7 residues coordinate phosphocholine: serine 88, valine 121, serine 139, proline 141, tyrosine 167, tyrosine 171, and tyrosine 172. Residues 139 to 154 (SIPYDYNLYSNWWNVK) are trp-rich region, which is important for the binding to lipid membrane. The Cell attachment site, crucial for protein stability motif lies at 178 to 180 (KGD).

It belongs to the actinoporin family. Sea anemone subfamily. As to quaternary structure, octamer or nonamer in membranes. Monomer in the soluble state.

The protein resides in the secreted. It is found in the nematocyst. Its subcellular location is the target cell membrane. Its function is as follows. Pore-forming protein that forms cation-selective hydrophilic pores of around 1 nm and causes cytolysis. Pore formation is a multi-step process that involves specific recognition of membrane sphingomyelin (but neither cholesterol nor phosphatidylcholine) using aromatic rich region and adjacent phosphocholine (POC) binding site, firm binding to the membrane (mainly driven by hydrophobic interactions) accompanied by the transfer of the N-terminal region to the lipid-water interface and finally pore formation after oligomerization of monomers. This protein shows potent hemolytic activity (EC(50)=8.8 ng/ml) that is specifically inhibited by sphingomyelin. Shows no phospholipase A2 activity, nor antimicrobial activity against the four bacteria tested. Is lethal to crayfish. This is DELTA-actitoxin-Aas1a from Anthopleura asiatica (Sea anemone).